Here is a 562-residue protein sequence, read N- to C-terminus: Alpha-amylase 2 (562 aa).

Asparagine 236 contacts Ca(2+). Aspartate 309 functions as the Nucleophile in the catalytic mechanism. Glutamate 338 acts as the Proton donor in catalysis.

The protein belongs to the glycosyl hydrolase 13 family. As to quaternary structure, monomer. Requires Ca(2+) as cofactor.

The protein resides in the cytoplasm. It catalyses the reaction Endohydrolysis of (1-&gt;4)-alpha-D-glucosidic linkages in polysaccharides containing three or more (1-&gt;4)-alpha-linked D-glucose units.. This Dictyoglomus thermophilum (strain ATCC 35947 / DSM 3960 / H-6-12) protein is Alpha-amylase 2 (amyB).